We begin with the raw amino-acid sequence, 455 residues long: Elongation factor Tu, mitochondrial (455 aa).

Residues 1–46 constitute a mitochondrion transit peptide; it reads MTTMAAATLLRATPHFSGLAAGRTFLLQGLLRLLKAPALPLLCRGL. One can recognise a tr-type G domain in the interval 58-254; that stretch reads KPHVNVGTIG…AVDTYIPVPA (197 aa). Residues 67–74 are G1; that stretch reads GHVDHGKT. Asp70, Gly72, Lys73, Thr74, and Thr75 together coordinate GTP. Thr74 is a binding site for Mg(2+). N6-acetyllysine is present on Lys82. Lys91 carries the post-translational modification N6-acetyllysine; alternate. Lys91 bears the N6-succinyllysine; alternate mark. The tract at residues 108-112 is G2; it reads GITIN. The G3 stretch occupies residues 129–132; sequence DCPG. GTP is bound by residues Asn184, Asp187, Ser222, Ala223, and Leu224. Residues 184 to 187 form a G4 region; sequence NKAD. Positions 222-224 are G5; sequence SAL. The residue at position 237 (Lys237) is an N6-succinyllysine. Lys259 bears the N6-acetyllysine mark. Position 281 is a phosphothreonine (Thr281). Lys289 carries the N6-succinyllysine modification. The residue at position 315 (Ser315) is a Phosphoserine. 2 positions are modified to N6-acetyllysine: Lys364 and Lys421.

It belongs to the TRAFAC class translation factor GTPase superfamily. Classic translation factor GTPase family. EF-Tu/EF-1A subfamily. In terms of assembly, interacts with NLRX1. Interacts with ATG16L1. As to quaternary structure, (Microbial infection) Interacts with human parainfluenza virus 3 matrix protein; this interaction inhibits RLR-mediated type I interferon production while promoting autophagy. (Microbial infection) Interacts with Hantaan hantavirus glycoprotein N; this interaction contributes to the virus-induced degradation of mitochondria by autophagy, which leads to degradation of MAVS and inhibition of type I interferon (IFN) responses.

The protein resides in the mitochondrion. The enzyme catalyses GTP + H2O = GDP + phosphate + H(+). Its function is as follows. GTP hydrolase that promotes the GTP-dependent binding of aminoacyl-tRNA to the A-site of ribosomes during protein biosynthesis. Also plays a role in the regulation of autophagy and innate immunity. Recruits ATG5-ATG12 and NLRX1 at mitochondria and serves as a checkpoint of the RIGI-MAVS pathway. In turn, inhibits RLR-mediated type I interferon while promoting autophagy. The protein is Elongation factor Tu, mitochondrial (TUFM) of Homo sapiens (Human).